A 452-amino-acid polypeptide reads, in one-letter code: Pup--protein ligase (452 aa).

Glutamate 9 contacts Mg(2+). Arginine 53 serves as a coordination point for ATP. A Mg(2+)-binding site is contributed by tyrosine 55. Residue aspartate 57 is the Proton acceptor of the active site. Glutamate 63 provides a ligand contact to Mg(2+). Residues threonine 66 and tryptophan 419 each coordinate ATP.

It belongs to the Pup ligase/Pup deamidase family. Pup-conjugating enzyme subfamily.

It catalyses the reaction ATP + [prokaryotic ubiquitin-like protein]-L-glutamate + [protein]-L-lysine = ADP + phosphate + N(6)-([prokaryotic ubiquitin-like protein]-gamma-L-glutamyl)-[protein]-L-lysine.. It functions in the pathway protein degradation; proteasomal Pup-dependent pathway. It participates in protein modification; protein pupylation. In terms of biological role, catalyzes the covalent attachment of the prokaryotic ubiquitin-like protein modifier Pup to the proteasomal substrate proteins, thereby targeting them for proteasomal degradation. This tagging system is termed pupylation. The ligation reaction involves the side-chain carboxylate of the C-terminal glutamate of Pup and the side-chain amino group of a substrate lysine. The protein is Pup--protein ligase of Mycobacterium leprae (strain Br4923).